Reading from the N-terminus, the 207-residue chain is Large ribosomal subunit protein uL3c (207 aa).

A disordered region spans residues 128-148 (FTRGPMTHGSKNHRAPGSIGM).

The protein belongs to the universal ribosomal protein uL3 family. Part of the 50S ribosomal subunit.

Its subcellular location is the plastid. The protein resides in the chloroplast. Functionally, one of the primary rRNA binding proteins, it binds directly near the 3'-end of the 23S rRNA, where it nucleates assembly of the 50S subunit. In Trieres chinensis (Marine centric diatom), this protein is Large ribosomal subunit protein uL3c (rpl3).